The chain runs to 270 residues: Small ribosomal subunit protein eS1 (270 aa).

The disordered stretch occupies residues 235-270; that stretch reads GTSKGGAASTAAVAKGEEGVKVDRPEGYEPPVLETV. Positions 239 to 248 are enriched in low complexity; sequence GGAASTAAVA. Residues 249-261 show a composition bias toward basic and acidic residues; sequence KGEEGVKVDRPEG.

It belongs to the eukaryotic ribosomal protein eS1 family. Component of the small ribosomal subunit. Mature ribosomes consist of a small (40S) and a large (60S) subunit. The 40S subunit contains about 33 different proteins and 1 molecule of RNA (18S). The 60S subunit contains about 49 different proteins and 3 molecules of RNA (28S, 5.8S and 5S).

Its subcellular location is the cytoplasm. The sequence is that of Small ribosomal subunit protein eS1 from Ixodes scapularis (Black-legged tick).